The primary structure comprises 565 residues: Sulfite reductase [NADPH] hemoprotein beta-component (565 aa).

Residues Cys-429, Cys-435, Cys-474, and Cys-478 each contribute to the [4Fe-4S] cluster site. Cys-478 lines the siroheme pocket.

Belongs to the nitrite and sulfite reductase 4Fe-4S domain family. As to quaternary structure, alpha(8)-beta(8). The alpha component is a flavoprotein, the beta component is a hemoprotein. Requires siroheme as cofactor. [4Fe-4S] cluster is required as a cofactor.

It carries out the reaction hydrogen sulfide + 3 NADP(+) + 3 H2O = sulfite + 3 NADPH + 4 H(+). It functions in the pathway sulfur metabolism; hydrogen sulfide biosynthesis; hydrogen sulfide from sulfite (NADPH route): step 1/1. In terms of biological role, component of the sulfite reductase complex that catalyzes the 6-electron reduction of sulfite to sulfide. This is one of several activities required for the biosynthesis of L-cysteine from sulfate. The chain is Sulfite reductase [NADPH] hemoprotein beta-component from Pseudoalteromonas translucida (strain TAC 125).